We begin with the raw amino-acid sequence, 278 residues long: TnpB-like protein MJ0751 (278 aa).

Zn(2+) is bound by residues Cys-222, Cys-225, Cys-239, and Cys-242.

It in the N-terminal section; belongs to the transposase 2 family. This sequence in the C-terminal section; belongs to the transposase 35 family.

This Methanocaldococcus jannaschii (strain ATCC 43067 / DSM 2661 / JAL-1 / JCM 10045 / NBRC 100440) (Methanococcus jannaschii) protein is TnpB-like protein MJ0751.